The following is a 108-amino-acid chain: UPF0060 membrane protein Mflv_3127 (108 aa).

The next 4 helical transmembrane spans lie at 7–27 (LLFVLAAVLEIGGAWLVWQGF), 32–52 (GWLWVGAGVLALGAYGFVAAF), 61–81 (VLAAYGGVFVAGSLIWGMVAD), and 87–107 (RWDITGAAVCLLGVVLIMYAP).

Belongs to the UPF0060 family.

Its subcellular location is the cell membrane. This chain is UPF0060 membrane protein Mflv_3127, found in Mycolicibacterium gilvum (strain PYR-GCK) (Mycobacterium gilvum (strain PYR-GCK)).